Reading from the N-terminus, the 310-residue chain is Tryptophan 2,3-dioxygenase (310 aa).

The interval 1-36 (MQPPGEDAPAGCPFSGARAAHSAPAAPAAHEASHVP) is disordered. Low complexity predominate over residues 15-36 (SGARAAHSAPAAPAAHEASHVP). Substrate contacts are provided by residues 79–83 (FIIQH), Tyr141, and Arg145. His268 serves as a coordination point for heme. Residue Thr282 participates in substrate binding.

It belongs to the tryptophan 2,3-dioxygenase family. As to quaternary structure, homotetramer. Heme serves as cofactor.

It carries out the reaction L-tryptophan + O2 = N-formyl-L-kynurenine. The protein operates within amino-acid degradation; L-tryptophan degradation via kynurenine pathway; L-kynurenine from L-tryptophan: step 1/2. In terms of biological role, heme-dependent dioxygenase that catalyzes the oxidative cleavage of the L-tryptophan (L-Trp) pyrrole ring and converts L-tryptophan to N-formyl-L-kynurenine. Catalyzes the oxidative cleavage of the indole moiety. The sequence is that of Tryptophan 2,3-dioxygenase from Burkholderia lata (strain ATCC 17760 / DSM 23089 / LMG 22485 / NCIMB 9086 / R18194 / 383).